The sequence spans 428 residues: Glutamate-1-semialdehyde 2,1-aminomutase (428 aa).

Residue lysine 267 is modified to N6-(pyridoxal phosphate)lysine.

The protein belongs to the class-III pyridoxal-phosphate-dependent aminotransferase family. HemL subfamily. As to quaternary structure, homodimer. Pyridoxal 5'-phosphate serves as cofactor.

The protein localises to the cytoplasm. It carries out the reaction (S)-4-amino-5-oxopentanoate = 5-aminolevulinate. It participates in porphyrin-containing compound metabolism; protoporphyrin-IX biosynthesis; 5-aminolevulinate from L-glutamyl-tRNA(Glu): step 2/2. It functions in the pathway porphyrin-containing compound metabolism; chlorophyll biosynthesis. The sequence is that of Glutamate-1-semialdehyde 2,1-aminomutase from Prochlorococcus marinus (strain NATL1A).